The chain runs to 493 residues: MQFLARNLVRRVSRTQVVSRNAYSTQTVRDIGQPTPASHPHLMAEGEVTPGIRIEEYIGRRKKLVELLPENSLAIISSAPVKMMTDVVPYTFRQDADYLYLTGCQQPGGVAVLSDERGLCMFMPESTPKDIAWEGEVAGVDAASEVFKADQAYPISKLPEILSDMIRHSSKVFHNVQSASQRYTNLDDFQNSASLGKVKTLSSLTHELRLIKSPAELKLMRESASIACQGLLKTMLHSKGFPDEGILSAQVEYECRVRGAQRMAFNPVVGGGSNASVIHYSRNDQRIKDGDLVLMDMGCELHGYVSDLTRTWPPCGKFSSVQEELYDLILQTNKECIKQCKPGTTIRQLNTYSTELLCDGLMKMGILKSRRLYHQLNPTSIGHYLGMDVHDSSAVGYDRPLQPGFVITIEPGVYIPSSFDCPERFQGIGIRIEDDVLITETGYEVLTGSMPKEIKHIETLLNNHCHDNSARTSPVSLCKVKGLHTNRNPRRLF.

A mitochondrion-targeting transit peptide spans 1–19; the sequence is MQFLARNLVRRVSRTQVVS. Mn(2+) is bound by residues Asp-296, Asp-307, His-383, Glu-410, and Glu-433.

Belongs to the peptidase M24B family. It depends on Mn(2+) as a cofactor.

It is found in the mitochondrion. Its subcellular location is the nucleus. Aminopeptidase which cleaves preprotein intermediates that carry destabilizing N-ter amino acid residues after the mitochondrial processing peptidase (MPP) cleavage site and is thus critical for stabilization of the mitochondrial proteome. The polypeptide is Intermediate cleaving peptidase 55, mitochondrial (Arabidopsis thaliana (Mouse-ear cress)).